We begin with the raw amino-acid sequence, 334 residues long: 5-formaminoimidazole-4-carboxamide-1-(beta)-D-ribofuranosyl 5'-monophosphate synthetase (334 aa).

5-amino-1-(5-phospho-beta-D-ribosyl)imidazole-4-carboxamide contacts are provided by Ser-10, His-11, Ser-71, and His-75. Positions 78 to 325 (IELVENMKVP…IAMEIREAIE (248 aa)) constitute an ATP-grasp domain. ATP-binding positions include 132-142 (KPHGAKGGKGY), 173-176 (QEYV), and Glu-204. Position 232 (Asn-232) interacts with 5-amino-1-(5-phospho-beta-D-ribosyl)imidazole-4-carboxamide. 2 residues coordinate Mg(2+): Glu-270 and Glu-283.

This sequence belongs to the phosphohexose mutase family. As to quaternary structure, homotrimer and homohexamer. Mg(2+) serves as cofactor. The cofactor is Mn(2+).

The catalysed reaction is 5-amino-1-(5-phospho-beta-D-ribosyl)imidazole-4-carboxamide + formate + ATP = 5-formamido-1-(5-phospho-D-ribosyl)imidazole-4-carboxamide + ADP + phosphate. The protein operates within purine metabolism; IMP biosynthesis via de novo pathway; 5-formamido-1-(5-phospho-D-ribosyl)imidazole-4-carboxamide from 5-amino-1-(5-phospho-D-ribosyl)imidazole-4-carboxamide (formate route): step 1/1. Catalyzes the ATP- and formate-dependent formylation of 5-aminoimidazole-4-carboxamide-1-beta-d-ribofuranosyl 5'-monophosphate (AICAR) to 5-formaminoimidazole-4-carboxamide-1-beta-d-ribofuranosyl 5'-monophosphate (FAICAR) in the absence of folates. The protein is 5-formaminoimidazole-4-carboxamide-1-(beta)-D-ribofuranosyl 5'-monophosphate synthetase of Pyrococcus furiosus (strain ATCC 43587 / DSM 3638 / JCM 8422 / Vc1).